The chain runs to 84 residues: Small ribosomal subunit protein uS17 (84 aa).

This sequence belongs to the universal ribosomal protein uS17 family. Part of the 30S ribosomal subunit.

In terms of biological role, one of the primary rRNA binding proteins, it binds specifically to the 5'-end of 16S ribosomal RNA. The chain is Small ribosomal subunit protein uS17 from Borreliella afzelii (strain PKo) (Borrelia afzelii).